The primary structure comprises 345 residues: Putative [LysW]-L-2-aminoadipate/[LysW]-L-glutamate phosphate reductase (345 aa).

11–14 (SGFT) is a binding site for NADP(+). A disordered region spans residues 34 to 56 (TSRSKENKTIGHSHPNLRHSDLR). The active site involves cysteine 146. Asparagine 309 is an NADP(+) binding site.

This sequence belongs to the NAGSA dehydrogenase family. Type 1 subfamily. LysY sub-subfamily.

Its subcellular location is the cytoplasm. It carries out the reaction [amino-group carrier protein]-C-terminal-N-(1-carboxy-5-oxopentan-1-yl)-L-glutamine + phosphate + NADP(+) = [amino-group carrier protein]-C-terminal-N-(1-carboxy-5-phosphooxy-5-oxopentan-1-yl)-L-glutamine + NADPH + H(+). It catalyses the reaction [amino-group carrier protein]-C-terminal-gamma-(L-glutamyl-5-semialdehyde)-L-glutamate + phosphate + NADP(+) = [amino-group carrier protein]-C-terminal-gamma-(5-phospho-L-glutamyl)-L-glutamate + NADPH + H(+). The protein operates within amino-acid biosynthesis; L-lysine biosynthesis via AAA pathway; L-lysine from L-alpha-aminoadipate (Thermus route): step 3/5. It participates in amino-acid biosynthesis; L-arginine biosynthesis. Functionally, involved in both the arginine and lysine biosynthetic pathways. This Haloarcula marismortui (strain ATCC 43049 / DSM 3752 / JCM 8966 / VKM B-1809) (Halobacterium marismortui) protein is Putative [LysW]-L-2-aminoadipate/[LysW]-L-glutamate phosphate reductase.